A 182-amino-acid polypeptide reads, in one-letter code: MNLSNHFLVAMPDMEDAFFSQSVVYICKHDEDGALGIAINKPSPITMDMIFSATGKNIPMRMQHDSVMMGGPVQVDRGYVVHTPIGNWQSSIGVSDNIALTSSRDVIENISREGAVDKALISIGYSSWGKGQLERELADNAWLTVPADEHILFDIPYEHRYAAAFAKLGIDPLALHGKAGHA.

The protein belongs to the UPF0301 (AlgH) family.

The protein is UPF0301 protein NMCC_1249 of Neisseria meningitidis serogroup C (strain 053442).